The sequence spans 167 residues: MARYEDLPYRTCVGVMLINAKGLVFIGRRAGGIEHIDDTHVWQMPQGGVDPGEDTWAAAKRELYEETSVRSVERLGEVPDWLIYDIPRTVAGRAWKGRYRGQRQKWFAVRFTGKDSEINVENPGGGHKAEFVSWRWEPMKNLPGLIIPFKRPVYERVVKEFSALAEE.

In terms of domain architecture, Nudix hydrolase spans 8-159 (PYRTCVGVML…KRPVYERVVK (152 aa)). The short motif at 47–68 (GGVDPGEDTWAAAKRELYEETS) is the Nudix box element.

It belongs to the Nudix hydrolase family. RppH subfamily. Requires a divalent metal cation as cofactor.

In terms of biological role, accelerates the degradation of transcripts by removing pyrophosphate from the 5'-end of triphosphorylated RNA, leading to a more labile monophosphorylated state that can stimulate subsequent ribonuclease cleavage. The polypeptide is RNA pyrophosphohydrolase (Bradyrhizobium diazoefficiens (strain JCM 10833 / BCRC 13528 / IAM 13628 / NBRC 14792 / USDA 110)).